Consider the following 521-residue polypeptide: Medium/long-chain-fatty-acid--[acyl-carrier-protein] ligase MbtM (521 aa).

The protein belongs to the ATP-dependent AMP-binding enzyme family.

The enzyme catalyses a long-chain fatty acid + holo-[ACP] + ATP = a long-chain fatty acyl-[ACP] + AMP + diphosphate. The catalysed reaction is a medium-chain fatty acid + holo-[ACP] + ATP = a medium-chain fatty acyl-[ACP] + AMP + diphosphate. The protein operates within siderophore biosynthesis; mycobactin biosynthesis. Functionally, activates lipidic moieties required for mycobactin biosynthesis. Converts medium- to long-chain aliphatic fatty acids into acyl adenylate, which is further transferred on to the phosphopantetheine arm of the carrier protein MbtL. The protein is Medium/long-chain-fatty-acid--[acyl-carrier-protein] ligase MbtM (mbtM) of Mycobacterium bovis (strain ATCC BAA-935 / AF2122/97).